The sequence spans 24 residues: Humanin-like 10 (24 aa).

It belongs to the humanin family. In terms of tissue distribution, expressed in mature brain, thyroid gland and testis.

The protein resides in the secreted. It localises to the cytoplasm. Functionally, plays a role as a neuroprotective and antiapoptotic factor. The chain is Humanin-like 10 from Homo sapiens (Human).